The chain runs to 348 residues: Dihydroorotase (348 aa).

Zn(2+)-binding residues include H17 and H19. Substrate-binding positions include 19–21 (HLR) and N45. 3 residues coordinate Zn(2+): K103, H140, and H178. K103 is subject to N6-carboxylysine. H140 is a substrate binding site. L223 provides a ligand contact to substrate. Position 251 (D251) interacts with Zn(2+). The active site involves D251. Residues H255 and A267 each contribute to the substrate site.

Belongs to the metallo-dependent hydrolases superfamily. DHOase family. Class II DHOase subfamily. As to quaternary structure, homodimer. Zn(2+) serves as cofactor.

It catalyses the reaction (S)-dihydroorotate + H2O = N-carbamoyl-L-aspartate + H(+). It participates in pyrimidine metabolism; UMP biosynthesis via de novo pathway; (S)-dihydroorotate from bicarbonate: step 3/3. Catalyzes the reversible cyclization of carbamoyl aspartate to dihydroorotate. This Escherichia coli O139:H28 (strain E24377A / ETEC) protein is Dihydroorotase.